Reading from the N-terminus, the 564-residue chain is Dihydroxy-acid dehydratase (564 aa).

Cysteine 51 is a binding site for [2Fe-2S] cluster. Aspartate 83 contributes to the Mg(2+) binding site. Cysteine 124 serves as a coordination point for [2Fe-2S] cluster. Mg(2+)-binding residues include aspartate 125 and lysine 126. At lysine 126 the chain carries N6-carboxylysine. Position 196 (cysteine 196) interacts with [2Fe-2S] cluster. Position 448 (glutamate 448) interacts with Mg(2+). Catalysis depends on serine 474, which acts as the Proton acceptor.

This sequence belongs to the IlvD/Edd family. As to quaternary structure, homodimer. It depends on [2Fe-2S] cluster as a cofactor. Mg(2+) is required as a cofactor.

The catalysed reaction is (2R)-2,3-dihydroxy-3-methylbutanoate = 3-methyl-2-oxobutanoate + H2O. The enzyme catalyses (2R,3R)-2,3-dihydroxy-3-methylpentanoate = (S)-3-methyl-2-oxopentanoate + H2O. It functions in the pathway amino-acid biosynthesis; L-isoleucine biosynthesis; L-isoleucine from 2-oxobutanoate: step 3/4. It participates in amino-acid biosynthesis; L-valine biosynthesis; L-valine from pyruvate: step 3/4. In terms of biological role, functions in the biosynthesis of branched-chain amino acids. Catalyzes the dehydration of (2R,3R)-2,3-dihydroxy-3-methylpentanoate (2,3-dihydroxy-3-methylvalerate) into 2-oxo-3-methylpentanoate (2-oxo-3-methylvalerate) and of (2R)-2,3-dihydroxy-3-methylbutanoate (2,3-dihydroxyisovalerate) into 2-oxo-3-methylbutanoate (2-oxoisovalerate), the penultimate precursor to L-isoleucine and L-valine, respectively. The sequence is that of Dihydroxy-acid dehydratase from Polynucleobacter asymbioticus (strain DSM 18221 / CIP 109841 / QLW-P1DMWA-1) (Polynucleobacter necessarius subsp. asymbioticus).